Reading from the N-terminus, the 207-residue chain is Ribosomal RNA small subunit methyltransferase G (207 aa).

Residues Gly76, Gln81, 127–128, and Arg141 each bind S-adenosyl-L-methionine; that span reads VE.

Belongs to the methyltransferase superfamily. RNA methyltransferase RsmG family.

The protein localises to the cytoplasm. It carries out the reaction guanosine(527) in 16S rRNA + S-adenosyl-L-methionine = N(7)-methylguanosine(527) in 16S rRNA + S-adenosyl-L-homocysteine. Specifically methylates the N7 position of guanine in position 527 of 16S rRNA. This Neisseria meningitidis serogroup B (strain ATCC BAA-335 / MC58) protein is Ribosomal RNA small subunit methyltransferase G.